An 88-amino-acid polypeptide reads, in one-letter code: Large ribosomal subunit protein bL27 (88 aa).

Positions 1–13 are enriched in polar residues; the sequence is MATKKGASSSSNG. The disordered stretch occupies residues 1–23; the sequence is MATKKGASSSSNGRDSEAKRLGV.

Belongs to the bacterial ribosomal protein bL27 family.

This Corynebacterium urealyticum (strain ATCC 43042 / DSM 7109) protein is Large ribosomal subunit protein bL27.